The sequence spans 274 residues: 2,3,4,5-tetrahydropyridine-2,6-dicarboxylate N-succinyltransferase (274 aa).

Positions 106 and 143 each coordinate substrate.

It belongs to the transferase hexapeptide repeat family. Homotrimer.

It localises to the cytoplasm. It carries out the reaction (S)-2,3,4,5-tetrahydrodipicolinate + succinyl-CoA + H2O = (S)-2-succinylamino-6-oxoheptanedioate + CoA. The protein operates within amino-acid biosynthesis; L-lysine biosynthesis via DAP pathway; LL-2,6-diaminopimelate from (S)-tetrahydrodipicolinate (succinylase route): step 1/3. In Acidovorax ebreus (strain TPSY) (Diaphorobacter sp. (strain TPSY)), this protein is 2,3,4,5-tetrahydropyridine-2,6-dicarboxylate N-succinyltransferase.